The primary structure comprises 314 residues: Putative integrase/recombinase y4rB (314 aa).

In terms of domain architecture, Core-binding (CB) spans Ser2–Ala79. The Tyr recombinase domain maps to Ala100–Arg304. Active-site residues include Arg147, Lys172, His248, Arg251, and His282. Residue Tyr291 is the O-(3'-phospho-DNA)-tyrosine intermediate of the active site.

Belongs to the 'phage' integrase family.

The sequence is that of Putative integrase/recombinase y4rB from Sinorhizobium fredii (strain NBRC 101917 / NGR234).